A 178-amino-acid polypeptide reads, in one-letter code: dCTP deaminase, dUMP-forming (178 aa).

DCTP-binding positions include Arg-96 to Arg-101, Asp-113, Thr-121 to Glu-123, Gln-142, Tyr-156, and Gln-163. The active-site Proton donor/acceptor is the Glu-123.

It belongs to the dCTP deaminase family. As to quaternary structure, homotrimer.

It catalyses the reaction dCTP + 2 H2O = dUMP + NH4(+) + diphosphate. It participates in pyrimidine metabolism; dUMP biosynthesis; dUMP from dCTP: step 1/1. Bifunctional enzyme that catalyzes both the deamination of dCTP to dUTP and the hydrolysis of dUTP to dUMP without releasing the toxic dUTP intermediate. This Acetivibrio thermocellus (strain ATCC 27405 / DSM 1237 / JCM 9322 / NBRC 103400 / NCIMB 10682 / NRRL B-4536 / VPI 7372) (Clostridium thermocellum) protein is dCTP deaminase, dUMP-forming.